A 162-amino-acid chain; its full sequence is Sorting nexin-12 (162 aa).

The segment at 1–20 is disordered; the sequence is MSDTAVADTRRLNSKPQDLT. Position 2 is an N-acetylserine (serine 2). Tyrosine 23 bears the Phosphotyrosine mark. Residues 28 to 152 form the PX domain; sequence NFLEIDIFNP…HMFLQEEAID (125 aa). A 1,2-diacyl-sn-glycero-3-phospho-(1D-myo-inositol-3-phosphate) contacts are provided by arginine 71, serine 73, lysine 96, and arginine 119. Serine 73 is modified (phosphoserine).

This sequence belongs to the sorting nexin family.

The protein localises to the membrane. Its function is as follows. May be involved in several stages of intracellular trafficking. This is Sorting nexin-12 (SNX12) from Homo sapiens (Human).